A 539-amino-acid polypeptide reads, in one-letter code: Protein peanut (539 aa).

A phosphoserine mark is found at Ser-6 and Ser-13. Residues 29–90 (LRDKQQAASA…GASNGDSNKL (62 aa)) form a disordered region. Over residues 35-54 (AASASASSATNGSSGSESLV) the composition is skewed to low complexity. The Septin-type G domain occupies 139–411 (RGFEFTLMVV…ENYRCRKLSE (273 aa)). Residues 149–156 (GASGLGKS) are G1 motif. Residues 149–156 (GASGLGKS), Thr-183, Gly-209, 288–296 (KADTMTPDE), Gly-345, and Arg-360 each bind GTP. The interval 206-209 (DTPG) is G3 motif. The interval 287-290 (AKAD) is G4 motif. Residues 420 to 516 (RLSNKNPLTQ…HVTLEELKRR (97 aa)) are a coiled coil. Residues 513 to 539 (LKRRSLGANSSTDNVDGKKEKKKKGLF) form a disordered region. Phosphoserine is present on Ser-517.

Belongs to the TRAFAC class TrmE-Era-EngA-EngB-Septin-like GTPase superfamily. Septin GTPase family. In terms of assembly, likely part of a multicomponent septin complex that includes Septin1. Interacts with Septin1. Interacts with hil. Interacts with park. Post-translationally, ubiquitinated by park, leading to its degradation by the proteasome. Accumulates at the leading edge of the cleavage furrow in dividing cells and cellularizing embryos (at protein level).

The protein resides in the apical cell membrane. It localises to the cleavage furrow. It is found in the cytoplasm. The protein localises to the cell cortex. Its function is as follows. Involved in cytokinesis and possibly cellularization. Also acts as an enhancer of the sina gene, thus having a role in photoreceptor development. May be involved in p53-dependent apoptosis. This is Protein peanut (pnut) from Drosophila melanogaster (Fruit fly).